Reading from the N-terminus, the 544-residue chain is Membrane protein insertase YidC (544 aa).

5 consecutive transmembrane segments (helical) span residues Asn-6–Asp-26, Leu-345–Leu-365, Gly-423–Leu-443, Leu-460–Met-480, and Val-503–Gly-523.

Belongs to the OXA1/ALB3/YidC family. Type 1 subfamily. Interacts with the Sec translocase complex via SecD. Specifically interacts with transmembrane segments of nascent integral membrane proteins during membrane integration.

It is found in the cell inner membrane. Its function is as follows. Required for the insertion and/or proper folding and/or complex formation of integral membrane proteins into the membrane. Involved in integration of membrane proteins that insert both dependently and independently of the Sec translocase complex, as well as at least some lipoproteins. Aids folding of multispanning membrane proteins. This Shewanella woodyi (strain ATCC 51908 / MS32) protein is Membrane protein insertase YidC.